Consider the following 99-residue polypeptide: uncharacterized protein (99 aa).

3 consecutive transmembrane segments (helical) span residues 7–29 (FFISYFLPLISFLGLLNLLYTLY), 39–61 (FISSSVVSIFTILFGTMPYARYN), and 68–90 (FCNLMVFVLPVSFFLVSLLLWLL).

Its subcellular location is the cell membrane. This is an uncharacterized protein from Archaeoglobus fulgidus (strain ATCC 49558 / DSM 4304 / JCM 9628 / NBRC 100126 / VC-16).